The chain runs to 171 residues: Co-chaperone protein HscB (171 aa).

Residues 2–74 (DYFTLFGLPA…LMRAEYLLSL (73 aa)) enclose the J domain.

The protein belongs to the HscB family. In terms of assembly, interacts with HscA and stimulates its ATPase activity. Interacts with IscU.

Co-chaperone involved in the maturation of iron-sulfur cluster-containing proteins. Seems to help targeting proteins to be folded toward HscA. This is Co-chaperone protein HscB from Escherichia coli (strain SE11).